The chain runs to 356 residues: Nucleotide-binding protein GDI1189/Gdia_1902 (356 aa).

Position 20-27 (20-27) interacts with ATP; that stretch reads GLSGAGKS. Residue 65-68 coordinates GTP; that stretch reads DSRT. Residues 285–313 form a disordered region; it reads EPGGTCDSPGKPAHIEKGAAPTDVQSGGA.

The protein belongs to the RapZ-like family.

In terms of biological role, displays ATPase and GTPase activities. This Gluconacetobacter diazotrophicus (strain ATCC 49037 / DSM 5601 / CCUG 37298 / CIP 103539 / LMG 7603 / PAl5) protein is Nucleotide-binding protein GDI1189/Gdia_1902.